An 853-amino-acid chain; its full sequence is DNA mismatch repair protein MutS (853 aa).

614–621 (GPNMGGKS) is an ATP binding site.

Belongs to the DNA mismatch repair MutS family.

Its function is as follows. This protein is involved in the repair of mismatches in DNA. It is possible that it carries out the mismatch recognition step. This protein has a weak ATPase activity. This Escherichia coli O7:K1 (strain IAI39 / ExPEC) protein is DNA mismatch repair protein MutS.